We begin with the raw amino-acid sequence, 77 residues long: Acyl carrier protein (77 aa).

In terms of domain architecture, Carrier spans 2–77 (SNIEERVKKI…AAIDYVSKNQ (76 aa)). Ser37 carries the O-(pantetheine 4'-phosphoryl)serine modification.

Belongs to the acyl carrier protein (ACP) family. Post-translationally, 4'-phosphopantetheine is transferred from CoA to a specific serine of apo-ACP by AcpS. This modification is essential for activity because fatty acids are bound in thioester linkage to the sulfhydryl of the prosthetic group.

It is found in the cytoplasm. The protein operates within lipid metabolism; fatty acid biosynthesis. Functionally, carrier of the growing fatty acid chain in fatty acid biosynthesis. This chain is Acyl carrier protein, found in Shewanella denitrificans (strain OS217 / ATCC BAA-1090 / DSM 15013).